A 239-amino-acid chain; its full sequence is Prolyl hydroxylase EGLN3 (239 aa).

The segment at 62 to 73 (AGPRAGVSKRHL) is beta(2)beta(3) 'finger-like' loop. The segment at 88 to 104 (CEAINFLLSLIDRLVLY) is required for interaction with ADRB2. Positions 116-214 (ERSKAMVACY…RYAMTVWYFD (99 aa)) constitute a Fe2OG dioxygenase domain. 3 residues coordinate Fe cation: H135, D137, and H196. A 2-oxoglutarate-binding site is contributed by R205.

As to quaternary structure, interacts with ADRB2; the interaction hydroxylates ADRB2 facilitating its ubiquitination by the VHL-E3 ligase complex. Interacts with PAX2; the interaction targets PAX2 for destruction. Interacts with PKM; the interaction hydroxylates PKM in hypoxia. Interacts with WDR83; the interaction leads to almost complete elimination of HIF-mediated reporter activity. Interacts with BCL2 (via its BH4 domain); the interaction disrupts the BAX-BCL4 complex inhibiting the anti-apoptotic activity of BCL2. Requires Fe(2+) as cofactor. The cofactor is L-ascorbate. Ubiquitinated by SIAH1 and/or SIAH2 in response to the unfolded protein response (UPR), leading to its degradation. Highly expressed in vascular smooth muscle. Moderately expressed in esophagus, stomach, small bowel and aorta. Low levels in tail and kidney. Expression also in pheochromocytoma cell line PC-12.

Its subcellular location is the nucleus. The protein localises to the cytoplasm. It catalyses the reaction L-prolyl-[protein] + 2-oxoglutarate + O2 = trans-4-hydroxy-L-prolyl-[protein] + succinate + CO2. The catalysed reaction is L-prolyl-[hypoxia-inducible factor alpha subunit] + 2-oxoglutarate + O2 = trans-4-hydroxy-L-prolyl-[hypoxia-inducible factor alpha subunit] + succinate + CO2. Prolyl hydroxylase that mediates hydroxylation of proline residues in target proteins, such as PKM, TELO2, ATF4 and HIF1A. Target proteins are preferentially recognized via a LXXLAP motif. Cellular oxygen sensor that catalyzes, under normoxic conditions, the post-translational formation of 4-hydroxyproline in hypoxia-inducible factor (HIF) alpha proteins. Hydroxylates a specific proline found in each of the oxygen-dependent degradation (ODD) domains (N-terminal, NODD, and C-terminal, CODD) of HIF1A. Also hydroxylates HIF2A. Has a preference for the CODD site for both HIF1A and HIF2A. Hydroxylation on the NODD site by EGLN3 appears to require prior hydroxylation on the CODD site. Hydroxylated HIFs are then targeted for proteasomal degradation via the von Hippel-Lindau ubiquitination complex. Under hypoxic conditions, the hydroxylation reaction is attenuated allowing HIFs to escape degradation resulting in their translocation to the nucleus, heterodimerization with HIF1B, and increased expression of hypoxy-inducible genes. ELGN3 is the most important isozyme in limiting physiological activation of HIFs (particularly HIF2A) in hypoxia. Also hydroxylates PKM in hypoxia, limiting glycolysis. Under normoxia, hydroxylates and regulates the stability of ADRB2. Regulator of cardiomyocyte and neuronal apoptosis. In cardiomyocytes, inhibits the anti-apoptotic effect of BCL2 by disrupting the BAX-BCL2 complex. In neurons, has a NGF-induced proapoptotic effect, probably through regulating CASP3 activity. Also essential for hypoxic regulation of neutrophilic inflammation. Plays a crucial role in DNA damage response (DDR) by hydroxylating TELO2, promoting its interaction with ATR which is required for activation of the ATR/CHK1/p53 pathway. Also mediates hydroxylation of ATF4, leading to decreased protein stability of ATF4. The chain is Prolyl hydroxylase EGLN3 (Egln3) from Rattus norvegicus (Rat).